Here is a 501-residue protein sequence, read N- to C-terminus: ATP synthase subunit alpha (501 aa).

ATP is bound at residue 169–176 (GDRQTGKT).

It belongs to the ATPase alpha/beta chains family. In terms of assembly, F-type ATPases have 2 components, CF(1) - the catalytic core - and CF(0) - the membrane proton channel. CF(1) has five subunits: alpha(3), beta(3), gamma(1), delta(1), epsilon(1). CF(0) has three main subunits: a(1), b(2) and c(9-12). The alpha and beta chains form an alternating ring which encloses part of the gamma chain. CF(1) is attached to CF(0) by a central stalk formed by the gamma and epsilon chains, while a peripheral stalk is formed by the delta and b chains.

The protein resides in the cell membrane. It carries out the reaction ATP + H2O + 4 H(+)(in) = ADP + phosphate + 5 H(+)(out). Its function is as follows. Produces ATP from ADP in the presence of a proton gradient across the membrane. The alpha chain is a regulatory subunit. This chain is ATP synthase subunit alpha, found in Streptococcus pyogenes serotype M2 (strain MGAS10270).